Here is a 492-residue protein sequence, read N- to C-terminus: MSDSKDRKGKAPEGQSSEKKDGAVNITPQMAESLLENNPALRNETAGMDKDKAAEAMRKMNIAELLTGLSVSGKNQKDMASYKFWQTQPVPRFDETSTDTGGPIKIIDPEKVSKEPDALLEGFEWATLDLTNETELQELWDLLTYHYVEDDNAMFRFRYSQSFLHWALMSPGWKKEWHVGVRATKSRKLVASICGVPTEINVRNQKLKVVEINFLCIHKKLRSKRLTPVLIKEITRRCYLNGIYQAIYTAGVVLPTPVSSCRYYHRPLDWLKLYEVGFSPLPAGSTKARQITKNHLPSTTSTPGLRPMEPKDIDTVHDLLQRYLSRFALNQAFTREEVDHWLVHKPETVKEQVVWAYVVEDPETHKITDFFSFYNLESTVIQNPKHDNVRAAYLYYYATETAFTNNMKALKERLLMLMNDALILAKKAHFDVFNALTLHDNPLFLEQLKFGAGDGQLHFYLYNYRTAPVPGGVNEKNLPDEKRMGGVGIVML.

A compositionally biased stretch (basic and acidic residues) spans 1–22 (MSDSKDRKGKAPEGQSSEKKDG). A disordered region spans residues 1 to 45 (MSDSKDRKGKAPEGQSSEKKDGAVNITPQMAESLLENNPALRNET). Tetradecanoyl-CoA contacts are provided by residues 82-85 (YKFW), 215-217 (LCI), and 223-227 (SKRLT). Leucine 492 acts as the Proton acceptor; via carboxylate in catalysis.

The protein belongs to the NMT family. In terms of assembly, monomer.

It localises to the cytoplasm. The enzyme catalyses N-terminal glycyl-[protein] + tetradecanoyl-CoA = N-tetradecanoylglycyl-[protein] + CoA + H(+). In terms of biological role, adds a myristoyl group to the N-terminal glycine residue of certain cellular proteins. In Aspergillus fumigatus (strain ATCC MYA-4609 / CBS 101355 / FGSC A1100 / Af293) (Neosartorya fumigata), this protein is Glycylpeptide N-tetradecanoyltransferase (nmt1).